Reading from the N-terminus, the 271-residue chain is Cell division protein FtsQ (271 aa).

The interval 1 to 37 is disordered; that stretch reads MAAGPTTAEKSGASGAKRSSKGSSDGPSRPGTRNRKF. At 1–43 the chain is on the cytoplasmic side; it reads MAAGPTTAEKSGASGAKRSSKGSSDGPSRPGTRNRKFRMPGTR. Low complexity predominate over residues 8-24; sequence AEKSGASGAKRSSKGSS. The chain crosses the membrane as a helical span at residues 44–64; that stretch reads ALLITLGVLLLVAGGLWALYG. The Extracellular segment spans residues 65–271; it reads STWFRVERVK…APTAPASSGS (207 aa). The region spanning 68–137 is the POTRA domain; sequence FRVERVKTSG…HGIGLKVTER (70 aa).

The protein belongs to the FtsQ/DivIB family. FtsQ subfamily.

Its subcellular location is the cell membrane. In terms of biological role, essential cell division protein. The polypeptide is Cell division protein FtsQ (Streptomyces venezuelae (strain ATCC 10712 / CBS 650.69 / DSM 40230 / JCM 4526 / NBRC 13096 / PD 04745)).